The chain runs to 151 residues: Ribosome maturation factor RimP (151 aa).

This sequence belongs to the RimP family.

It localises to the cytoplasm. Functionally, required for maturation of 30S ribosomal subunits. This chain is Ribosome maturation factor RimP, found in Vibrio parahaemolyticus serotype O3:K6 (strain RIMD 2210633).